A 1553-amino-acid chain; its full sequence is DNA topoisomerase 2-alpha (1553 aa).

The disordered stretch occupies residues 1-25; it reads MELLDSPAPLRPLHDNPRLPKADGA. Over residues 12–25 the composition is skewed to basic and acidic residues; the sequence is PLHDNPRLPKADGA. Residues asparagine 92, asparagine 121, 149–151, and 162–169 contribute to the ATP site; these read SSN and GRNGYGAK. The tract at residues 343–345 is interaction with DNA; it reads KKK. 377–379 serves as a coordination point for ATP; it reads QTK. The region spanning 456-573 is the Toprim domain; it reads CTLILTEGDS…SLLRHNFLEE (118 aa). Residues glutamate 462, aspartate 542, and aspartate 544 each contribute to the Mg(2+) site. Residues 716–1163 enclose the Topo IIA-type catalytic domain; that stretch reads IPSLVDGLKP…SPSDLWKEDL (448 aa). Catalysis depends on tyrosine 806, which acts as the O-(5'-phospho-DNA)-tyrosine intermediate. The interval 991–1000 is interaction with DNA; sequence KLQTNLTCNS. Disordered regions lie at residues 1095–1114 and 1186–1553; these read QNKE…AATG and TGKP…DDMF. Acidic residues predominate over residues 1098–1107; it reads EEEEGDESGE. Over residues 1242-1262 the composition is skewed to basic and acidic residues; it reads SEKNESDEKQEGNSSGDKEPS. 2 stretches are compositionally biased toward acidic residues: residues 1300–1310 and 1334–1349; these read SESDSESDDFE and SDAD…EYQE. The segment covering 1371–1385 has biased composition (basic and acidic residues); that stretch reads VPKEKKGKAPKEKPL. The segment covering 1413–1432 has biased composition (low complexity); that stretch reads PRAQAVPKKPAAAKKGSTAK. A compositionally biased stretch (basic residues) spans 1444 to 1454; sequence KKKAAPKAPRR. Residues 1517–1532 show a composition bias toward low complexity; it reads SIDLTADSPAAAAPRT.

It belongs to the type II topoisomerase family. Homodimer. Mg(2+) is required as a cofactor. It depends on Mn(2+) as a cofactor. Requires Ca(2+) as cofactor.

Its subcellular location is the cytoplasm. The protein localises to the nucleus. It localises to the nucleoplasm. The protein resides in the nucleolus. It catalyses the reaction ATP-dependent breakage, passage and rejoining of double-stranded DNA.. Functionally, key decatenating enzyme that alters DNA topology by binding to two double-stranded DNA molecules, generating a double-stranded break in one of the strands, passing the intact strand through the broken strand, and religating the broken strand. May play a role in the regulation of circadian rhythm. The polypeptide is DNA topoisomerase 2-alpha (TOP2A) (Gallus gallus (Chicken)).